The primary structure comprises 570 residues: Membrane protein insertase YidC (570 aa).

Polar residues predominate over residues 31–60; sequence QQPVAQTPSVTIDSNGADSSALLNSPNTGE. The segment at 31 to 79 is disordered; it reads QQPVAQTPSVTIDSNGADSSALLNSPNTGELDTPETASKPATAEDSNIS. A run of 5 helical transmembrane segments spans residues 230 to 250, 378 to 398, 444 to 464, 487 to 507, and 522 to 542; these read PTFS…STPE, WGIA…HLSA, LGGC…YWVL, PYFV…SLNP, and PIIF…YWLV.

The protein belongs to the OXA1/ALB3/YidC family. Type 1 subfamily. In terms of assembly, interacts with the Sec translocase complex via SecD. Specifically interacts with transmembrane segments of nascent integral membrane proteins during membrane integration.

It localises to the cell inner membrane. Its function is as follows. Required for the insertion and/or proper folding and/or complex formation of integral membrane proteins into the membrane. Involved in integration of membrane proteins that insert both dependently and independently of the Sec translocase complex, as well as at least some lipoproteins. Aids folding of multispanning membrane proteins. In Hahella chejuensis (strain KCTC 2396), this protein is Membrane protein insertase YidC.